The following is a 210-amino-acid chain: NAD(P)H-hydrate epimerase (210 aa).

The YjeF N-terminal domain maps to 11–210 (AHNFDDYTIN…TVADIGIYEP (200 aa)). A (6S)-NADPHX-binding site is contributed by 60–64 (NNGGD). K(+) is bound by residues N61 and D123. (6S)-NADPHX is bound by residues 127–133 (GVGLSRD) and D156. K(+) is bound at residue T159.

This sequence belongs to the NnrE/AIBP family. K(+) serves as cofactor.

The catalysed reaction is (6R)-NADHX = (6S)-NADHX. The enzyme catalyses (6R)-NADPHX = (6S)-NADPHX. Functionally, catalyzes the epimerization of the S- and R-forms of NAD(P)HX, a damaged form of NAD(P)H that is a result of enzymatic or heat-dependent hydration. This is a prerequisite for the S-specific NAD(P)H-hydrate dehydratase to allow the repair of both epimers of NAD(P)HX. In Oenococcus oeni (strain ATCC BAA-331 / PSU-1), this protein is NAD(P)H-hydrate epimerase.